Reading from the N-terminus, the 339-residue chain is DNA-directed RNA polymerase subunit alpha (339 aa).

The interval methionine 1–glutamate 233 is alpha N-terminal domain (alpha-NTD). Residues glycine 266 to leucine 339 form an alpha C-terminal domain (alpha-CTD) region.

It belongs to the RNA polymerase alpha chain family. In terms of assembly, in plastids the minimal PEP RNA polymerase catalytic core is composed of four subunits: alpha, beta, beta', and beta''. When a (nuclear-encoded) sigma factor is associated with the core the holoenzyme is formed, which can initiate transcription.

The protein resides in the plastid. It localises to the chloroplast. It catalyses the reaction RNA(n) + a ribonucleoside 5'-triphosphate = RNA(n+1) + diphosphate. DNA-dependent RNA polymerase catalyzes the transcription of DNA into RNA using the four ribonucleoside triphosphates as substrates. The sequence is that of DNA-directed RNA polymerase subunit alpha from Saccharum hybrid (Sugarcane).